The primary structure comprises 152 residues: Nascent polypeptide-associated complex subunit beta (152 aa).

Disordered stretches follow at residues 19-39 (IGKGTPRRKVKRAPARSAGDD) and 125-152 (NMQKNEKDAEEDDIPDLVAGENFESKVE). A compositionally biased stretch (basic residues) spans 23-32 (TPRRKVKRAP). The NAC-A/B domain maps to 36–101 (AGDDKKLQAT…GEDKELTELV (66 aa)).

This sequence belongs to the NAC-beta family. In terms of assembly, part of the nascent polypeptide-associated complex (NAC), consisting of npc-1/egd2 and npc-2/egd1. NAC associates with ribosomes via npc-2/egd1.

It localises to the cytoplasm. Its subcellular location is the nucleus. Component of the nascent polypeptide-associated complex (NAC), a dynamic component of the ribosomal exit tunnel, protecting the emerging polypeptides from interaction with other cytoplasmic proteins to ensure appropriate nascent protein targeting. The NAC complex also promotes mitochondrial protein import by enhancing productive ribosome interactions with the outer mitochondrial membrane and blocks the inappropriate interaction of ribosomes translating non-secretory nascent polypeptides with translocation sites in the membrane of the endoplasmic reticulum. Npc-2/egd1 may act as a transcription factor that exert a negative effect on the expression of several genes that are transcribed by RNA polymerase II. The chain is Nascent polypeptide-associated complex subunit beta (npc-2) from Neurospora crassa (strain ATCC 24698 / 74-OR23-1A / CBS 708.71 / DSM 1257 / FGSC 987).